Here is a 161-residue protein sequence, read N- to C-terminus: ATP synthase subunit b 1 (161 aa).

A helical transmembrane segment spans residues 3 to 23 (LDATFYALVGLILFFVLIAYL).

Belongs to the ATPase B chain family. F-type ATPases have 2 components, F(1) - the catalytic core - and F(0) - the membrane proton channel. F(1) has five subunits: alpha(3), beta(3), gamma(1), delta(1), epsilon(1). F(0) has three main subunits: a(1), b(2) and c(10-14). The alpha and beta chains form an alternating ring which encloses part of the gamma chain. F(1) is attached to F(0) by a central stalk formed by the gamma and epsilon chains, while a peripheral stalk is formed by the delta and b chains.

It localises to the cell inner membrane. F(1)F(0) ATP synthase produces ATP from ADP in the presence of a proton or sodium gradient. F-type ATPases consist of two structural domains, F(1) containing the extramembraneous catalytic core and F(0) containing the membrane proton channel, linked together by a central stalk and a peripheral stalk. During catalysis, ATP synthesis in the catalytic domain of F(1) is coupled via a rotary mechanism of the central stalk subunits to proton translocation. Functionally, component of the F(0) channel, it forms part of the peripheral stalk, linking F(1) to F(0). The chain is ATP synthase subunit b 1 from Sinorhizobium medicae (strain WSM419) (Ensifer medicae).